We begin with the raw amino-acid sequence, 458 residues long: Argininosuccinate lyase (458 aa).

Belongs to the lyase 1 family. Argininosuccinate lyase subfamily.

The protein localises to the cytoplasm. The catalysed reaction is 2-(N(omega)-L-arginino)succinate = fumarate + L-arginine. It participates in amino-acid biosynthesis; L-arginine biosynthesis; L-arginine from L-ornithine and carbamoyl phosphate: step 3/3. The polypeptide is Argininosuccinate lyase (Geobacter sp. (strain M21)).